We begin with the raw amino-acid sequence, 408 residues long: Phosphoenolpyruvate/phosphate translocator 1, chloroplastic (408 aa).

The transit peptide at methionine 1–proline 66 directs the protein to the chloroplast. Transmembrane regions (helical) follow at residues threonine 105–tyrosine 125, isoleucine 139–isoleucine 159, isoleucine 165–leucine 185, proline 222–leucine 242, alanine 245–phenylalanine 262, isoleucine 283–leucine 303, and threonine 375–tyrosine 395. Positions isoleucine 124–serine 241 constitute an EamA domain.

This sequence belongs to the TPT transporter family. PPT (TC 2.A.7.9) subfamily.

The protein localises to the plastid. Its subcellular location is the chloroplast membrane. Phosphoenolpyruvate/phosphate translocator that transports phosphoenolpyruvate (PEP) and dihydroxyacetone phosphate. In Oryza sativa subsp. japonica (Rice), this protein is Phosphoenolpyruvate/phosphate translocator 1, chloroplastic (PPT1).